The primary structure comprises 1829 residues: Iron-regulated protein FrpC (1829 aa).

Hemolysin-type calcium-binding repeat units lie at residues 869–886 (FGHNKNVSLYGNDGNDTL), 887–904 (IGGAGNDYLEGGSGSDTY), 1015–1032 (NGGLGDDYLYGADGDDLL), 1033–1050 (NGDAGNDSIYSGNGNDTL), 1051–1068 (NGGEGNDALYGYNGNDAL), 1069–1086 (NGGEGNDHLNGEDGNDTL), 1087–1104 (IGGAGNDYLEGGSGSDTY), 1215–1232 (NGGLGDDYLYGADGDDLL), 1233–1250 (NGDAGNDSIYSGNGNDTL), 1251–1268 (DGGEGNDALYGYNGNDAL), 1269–1286 (NGGEGNDHLNGEDGNDTL), 1287–1304 (IGGAGNDYLEGGSGSDTY), 1415–1432 (NGGLGDDYLYGADGDDLL), 1433–1450 (NGDAGNDSIYSGNGNDTL), 1451–1468 (DGGEGNDALYGYNGNDAL), 1469–1486 (NGGEGNDHLNGEDGNDTL), 1487–1504 (IGGAGNDYLEGGSGSDTY), 1615–1632 (NGGLGDDYLYGADGDDLL), 1633–1650 (NGDAGNDSIYSGNGNDTL), 1651–1668 (NGGEGNDALYGYNGNDVL), 1669–1686 (NGGEGNDHLNGEDGNDTL), and 1687–1704 (IGGAGNDYLEGGSGSDTY).

The protein belongs to the RTX prokaryotic toxin (TC 1.C.11) family.

The protein localises to the cell outer membrane. The protein resides in the secreted. May participate in the pathogenesis of meningococcal disease. The chain is Iron-regulated protein FrpC (frpC) from Neisseria meningitidis serogroup C.